Reading from the N-terminus, the 628-residue chain is 1-deoxy-D-xylulose-5-phosphate synthase (628 aa).

Thiamine diphosphate contacts are provided by residues His72 and 113–115; that span reads GHS. Residue Asp144 participates in Mg(2+) binding. Residues 145-146, Asn173, Tyr284, and Glu363 each bind thiamine diphosphate; that span reads GA. Asn173 is a Mg(2+) binding site.

It belongs to the transketolase family. DXPS subfamily. In terms of assembly, homodimer. The cofactor is Mg(2+). Requires thiamine diphosphate as cofactor.

The enzyme catalyses D-glyceraldehyde 3-phosphate + pyruvate + H(+) = 1-deoxy-D-xylulose 5-phosphate + CO2. It functions in the pathway metabolic intermediate biosynthesis; 1-deoxy-D-xylulose 5-phosphate biosynthesis; 1-deoxy-D-xylulose 5-phosphate from D-glyceraldehyde 3-phosphate and pyruvate: step 1/1. In terms of biological role, catalyzes the acyloin condensation reaction between C atoms 2 and 3 of pyruvate and glyceraldehyde 3-phosphate to yield 1-deoxy-D-xylulose-5-phosphate (DXP). The chain is 1-deoxy-D-xylulose-5-phosphate synthase from Brevibacillus brevis (strain 47 / JCM 6285 / NBRC 100599).